Consider the following 177-residue polypeptide: Cyclic pyranopterin monophosphate synthase 3 (177 aa).

Residues 79–81 (LCH) and 116–117 (ME) each bind substrate. Residue aspartate 131 is part of the active site. The tract at residues 150–177 (KSGGRSGHYRRHDADVKPSDGGSTEDGC) is disordered.

This sequence belongs to the MoaC family. Homohexamer; trimer of dimers.

It carries out the reaction (8S)-3',8-cyclo-7,8-dihydroguanosine 5'-triphosphate = cyclic pyranopterin phosphate + diphosphate. The protein operates within cofactor biosynthesis; molybdopterin biosynthesis. Functionally, catalyzes the conversion of (8S)-3',8-cyclo-7,8-dihydroguanosine 5'-triphosphate to cyclic pyranopterin monophosphate (cPMP). The protein is Cyclic pyranopterin monophosphate synthase 3 (moaC3) of Mycobacterium bovis (strain ATCC BAA-935 / AF2122/97).